The sequence spans 761 residues: Translational repressor ifet-1 (761 aa).

Disordered stretches follow at residues 101–274 (SPQR…SSGG), 386–446 (KGME…QHLH), 557–592 (VQRQ…AHNQ), 681–702 (QQAQ…QQHQ), and 730–761 (GSQF…AVPK). Composition is skewed to basic and acidic residues over residues 114–128 (PTDD…ERLG), 164–189 (RGTR…EERL), and 212–222 (IELRGFDEPKK). Polar residues-rich tracts occupy residues 400 to 410 (QDPSQQAQLLQ), 557 to 568 (VQRQLQKSSSNA), 576 to 592 (SQSP…AHNQ), and 690 to 702 (ERQG…QQHQ).

Interacts with cgh-1. Interacts with ife-1 and oma-1. As to expression, in the embryo, significantly enriched in the germ cell lineage.

It localises to the cytoplasm. In terms of biological role, involved in translational repression of multiple mRNAs in the distal gonad. Recruited to the 3' untranslated region (UTR) of zif-1 by oma-1 and is required for translational repression of zif-1. May also be involved in translational repression of mei-1 through recruitment to the mei-1 3' UTR by oma-1. Required for oogenesis but not spermatogenesis, for P granule formation and for the localization of car-1 and cgh-1 to P granules. Required for normal spindle orientation in early embryos. The polypeptide is Translational repressor ifet-1 (Caenorhabditis elegans).